The chain runs to 294 residues: Eukaryotic translation initiation factor 3 subunit G (294 aa).

Disordered regions lie at residues 1–43 (MPSA…ENKI) and 160–211 (EDDG…RDET). Over residues 194–211 (GANRRGETMPSRSQRDET) the composition is skewed to basic and acidic residues. Residues 212–290 (ATIRVTNLSE…LILNVEWAKP (79 aa)) enclose the RRM domain.

It belongs to the eIF-3 subunit G family. Component of the eukaryotic translation initiation factor 3 (eIF-3) complex.

It is found in the cytoplasm. Its function is as follows. RNA-binding component of the eukaryotic translation initiation factor 3 (eIF-3) complex, which is involved in protein synthesis of a specialized repertoire of mRNAs and, together with other initiation factors, stimulates binding of mRNA and methionyl-tRNAi to the 40S ribosome. The eIF-3 complex specifically targets and initiates translation of a subset of mRNAs involved in cell proliferation. This subunit can bind 18S rRNA. The polypeptide is Eukaryotic translation initiation factor 3 subunit G (Nematostella vectensis (Starlet sea anemone)).